The primary structure comprises 163 residues: Phosphopantetheine adenylyltransferase (163 aa).

S9 is a substrate binding site. ATP-binding positions include 9 to 10 (SF) and H17. Residues K41, T73, and R87 each coordinate substrate. ATP is bound by residues 88-90 (GLR), E98, and 123-129 (YSYLSSS).

It belongs to the bacterial CoaD family. As to quaternary structure, homohexamer. It depends on Mg(2+) as a cofactor.

It localises to the cytoplasm. It carries out the reaction (R)-4'-phosphopantetheine + ATP + H(+) = 3'-dephospho-CoA + diphosphate. The protein operates within cofactor biosynthesis; coenzyme A biosynthesis; CoA from (R)-pantothenate: step 4/5. Its function is as follows. Reversibly transfers an adenylyl group from ATP to 4'-phosphopantetheine, yielding dephospho-CoA (dPCoA) and pyrophosphate. This is Phosphopantetheine adenylyltransferase from Lachnoclostridium phytofermentans (strain ATCC 700394 / DSM 18823 / ISDg) (Clostridium phytofermentans).